Reading from the N-terminus, the 533-residue chain is Acetone monooxygenase (methyl acetate-forming) (533 aa).

Residues 43–46 (TWYW), 55–56 (DS), and Tyr61 each bind FAD. 53 to 55 (RFD) is a binding site for NADP(+). Residues 183–189 (NGATGIQ), 206–207 (RT), and Trp492 each bind NADP(+).

It belongs to the FAD-binding monooxygenase family. Homotetramer. It depends on FAD as a cofactor.

It carries out the reaction acetone + NADPH + O2 + H(+) = methyl acetate + NADP(+) + H2O. Plays an important role in the metabolism of acetone derived from propane oxidation. Catalyzes the oxidation of acetone to methyl acetate. Exhibits high catalytic efficiency towards various linear and cyclic ketones, such as butanone, 2-pentanone, 2-heptanone, 2-octanone, 2-nonanone, 2-decanone, cyclobutanone, cyclopentanone and cyclohexanone. Elicits the highest catalytic efficiency towards butanone and cyclobutanone. Is highly specific for NADPH and cannot use NADH. The protein is Acetone monooxygenase (methyl acetate-forming) of Gordonia sp. (strain TY-5).